The primary structure comprises 133 residues: Large ribosomal subunit protein uL11 (133 aa).

Belongs to the universal ribosomal protein uL11 family. In terms of assembly, part of the ribosomal stalk of the 50S ribosomal subunit. Interacts with L10 and the large rRNA to form the base of the stalk. L10 forms an elongated spine to which 2 L12 dimers bind in a sequential fashion forming a pentameric L10(L12)2(L12)2 complex. One or more lysine residues are methylated.

In terms of biological role, forms part of the ribosomal stalk which helps the ribosome interact with GTP-bound translation factors. The chain is Large ribosomal subunit protein uL11 from Geobacillus stearothermophilus (Bacillus stearothermophilus).